A 179-amino-acid polypeptide reads, in one-letter code: ATP synthase subunit delta (179 aa).

It belongs to the ATPase delta chain family. F-type ATPases have 2 components, F(1) - the catalytic core - and F(0) - the membrane proton channel. F(1) has five subunits: alpha(3), beta(3), gamma(1), delta(1), epsilon(1). F(0) has three main subunits: a(1), b(2) and c(10-14). The alpha and beta chains form an alternating ring which encloses part of the gamma chain. F(1) is attached to F(0) by a central stalk formed by the gamma and epsilon chains, while a peripheral stalk is formed by the delta and b chains.

The protein resides in the cell inner membrane. Its function is as follows. F(1)F(0) ATP synthase produces ATP from ADP in the presence of a proton or sodium gradient. F-type ATPases consist of two structural domains, F(1) containing the extramembraneous catalytic core and F(0) containing the membrane proton channel, linked together by a central stalk and a peripheral stalk. During catalysis, ATP synthesis in the catalytic domain of F(1) is coupled via a rotary mechanism of the central stalk subunits to proton translocation. This protein is part of the stalk that links CF(0) to CF(1). It either transmits conformational changes from CF(0) to CF(1) or is implicated in proton conduction. The polypeptide is ATP synthase subunit delta (Burkholderia vietnamiensis (strain G4 / LMG 22486) (Burkholderia cepacia (strain R1808))).